An 880-amino-acid polypeptide reads, in one-letter code: Alanine--tRNA ligase (880 aa).

The interval 414-443 is disordered; sequence TVDESEFESEMEKQRNRARKARSGGDTEGW. Zn(2+)-binding residues include histidine 566, histidine 570, cysteine 668, and histidine 672.

It belongs to the class-II aminoacyl-tRNA synthetase family. It depends on Zn(2+) as a cofactor.

The protein localises to the cytoplasm. It carries out the reaction tRNA(Ala) + L-alanine + ATP = L-alanyl-tRNA(Ala) + AMP + diphosphate. Catalyzes the attachment of alanine to tRNA(Ala) in a two-step reaction: alanine is first activated by ATP to form Ala-AMP and then transferred to the acceptor end of tRNA(Ala). Also edits incorrectly charged Ser-tRNA(Ala) and Gly-tRNA(Ala) via its editing domain. This is Alanine--tRNA ligase from Alkaliphilus metalliredigens (strain QYMF).